The chain runs to 313 residues: Small glutamine-rich tetratricopeptide repeat-containing protein alpha (313 aa).

The interval 66-100 (ATGKEMPQDLRSPARTPPSEEDSAEAERLKTEGNE) is disordered. The residue at position 77 (Ser-77) is a Phosphoserine. Phosphothreonine is present on Thr-81. A Phosphoserine modification is found at Ser-84. Residues 90–100 (EAERLKTEGNE) show a composition bias toward basic and acidic residues. TPR repeat units lie at residues 91 to 124 (AERL…NPAN), 125 to 158 (AVYF…DPAY), and 159 to 192 (SKAY…DPDN). Lys-137 carries the N6-acetyllysine modification. The interval 250 to 269 (MISGGNNPLGTPGTSPSQND) is disordered. The residue at position 301 (Ser-301) is a Phosphoserine. Residue Thr-303 is modified to Phosphothreonine. Ser-305 bears the Phosphoserine mark.

The protein belongs to the SGT family. In terms of assembly, homodimer. Homooligomer. Interacts with DNAJC5 and DNAJC5B. Interacts (via TPR repeats) with HSP90AA1. Interacts (via Gln-rich region) with SLC2A1. Interacts with HSP90AB1. Interacts (via TPR repeats) with HSPA8/Hsc70; the interaction is direct. Interacts with BAG6 (via ubiquitin-like domain); interaction prevents interaction between BAG6 and RNF126. Forms a multiprotein complex, at least composed of DNAJB12, DNAJB14, HSPA8/Hsc70 and SGTA; interaction with DNAJB14 and HSPA8/Hsc70 is direct. (Microbial infection) Interacts with Vpu and Gag from HIV-1. As to quaternary structure, (Microbial infection) Interacts with SARS-CoV accessory protein 7a. Ubiquitous.

The protein localises to the cytoplasm. Its subcellular location is the nucleus. Functionally, co-chaperone that binds misfolded and hydrophobic patches-containing client proteins in the cytosol. Mediates their targeting to the endoplasmic reticulum but also regulates their sorting to the proteasome when targeting fails. Functions in tail-anchored/type II transmembrane proteins membrane insertion constituting with ASNA1 and the BAG6 complex a targeting module. Functions upstream of the BAG6 complex and ASNA1, binding more rapidly the transmembrane domain of newly synthesized proteins. It is also involved in the regulation of the endoplasmic reticulum-associated misfolded protein catabolic process via its interaction with BAG6: collaborates with the BAG6 complex to maintain hydrophobic substrates in non-ubiquitinated states. Competes with RNF126 for interaction with BAG6, preventing the ubiquitination of client proteins associated with the BAG6 complex. Binds directly to HSC70 and HSP70 and regulates their ATPase activity. (Microbial infection) In case of infection by polyomavirus, involved in the virus endoplasmic reticulum membrane penetration and infection via interaction with DNAJB12, DNAJB14 and HSPA8/Hsc70. The polypeptide is Small glutamine-rich tetratricopeptide repeat-containing protein alpha (SGTA) (Homo sapiens (Human)).